Reading from the N-terminus, the 356-residue chain is Transmembrane protein 82 (356 aa).

8 helical membrane passes run 31-51 (LIGA…FFVA), 77-97 (LAGL…LVVL), 120-140 (LQLF…GLSF), 144-164 (GAPH…LLAL), 202-222 (LLSR…VALI), 232-250 (AVRF…VIYM), 263-283 (GQVQ…MTVG), and 285-305 (WLDL…LAGI). Residues 331–356 (EGESGWTDPCEPRPSTPAPARSAVPS) are disordered.

The protein belongs to the TMEM82 family.

It is found in the membrane. The sequence is that of Transmembrane protein 82 (Tmem82) from Mus musculus (Mouse).